A 474-amino-acid chain; its full sequence is tRNA-2-methylthio-N(6)-dimethylallyladenosine synthase (474 aa).

Residues 3–120 (QKLHIKTWGC…LPEMINQIRG (118 aa)) enclose the MTTase N-terminal domain. Residues cysteine 12, cysteine 49, cysteine 83, cysteine 157, cysteine 161, and cysteine 164 each coordinate [4Fe-4S] cluster. Residues 143–375 (RAEGPTAFVS…QQRINNQAAQ (233 aa)) enclose the Radical SAM core domain. One can recognise a TRAM domain in the interval 378 to 441 (RAMLGTEQRV…TNSLRGEVVR (64 aa)).

The protein belongs to the methylthiotransferase family. MiaB subfamily. In terms of assembly, monomer. Requires [4Fe-4S] cluster as cofactor.

The protein resides in the cytoplasm. It catalyses the reaction N(6)-dimethylallyladenosine(37) in tRNA + (sulfur carrier)-SH + AH2 + 2 S-adenosyl-L-methionine = 2-methylsulfanyl-N(6)-dimethylallyladenosine(37) in tRNA + (sulfur carrier)-H + 5'-deoxyadenosine + L-methionine + A + S-adenosyl-L-homocysteine + 2 H(+). Catalyzes the methylthiolation of N6-(dimethylallyl)adenosine (i(6)A), leading to the formation of 2-methylthio-N6-(dimethylallyl)adenosine (ms(2)i(6)A) at position 37 in tRNAs that read codons beginning with uridine. The sequence is that of tRNA-2-methylthio-N(6)-dimethylallyladenosine synthase from Histophilus somni (strain 129Pt) (Haemophilus somnus).